An 882-amino-acid chain; its full sequence is Putative HTH-type transcriptional regulator Rv0890c (882 aa).

One can recognise an HTH luxR-type domain in the interval 814 to 879; it reads PARGWGSLTP…QLVDEAARRG (66 aa). Positions 838–857 form a DNA-binding region, H-T-H motif; that stretch reads NKDIAKRLFVSPRTVQTHLT.

The protein is Putative HTH-type transcriptional regulator Rv0890c of Mycobacterium tuberculosis (strain ATCC 25618 / H37Rv).